Consider the following 319-residue polypeptide: Free fatty acid receptor 3 (319 aa).

At 1-15 the chain is on the extracellular side; that stretch reads MDTSFFPGNHWLFFS. The chain crosses the membrane as a helical span at residues 16–36; that stretch reads VDLLVFLVGLPLNVMALVVFV. At 37 to 43 the chain is on the cytoplasmic side; it reads NKLRRRP. A helical membrane pass occupies residues 44–64; it reads VAVDLLLLNLTISDLLLLLFL. The Extracellular portion of the chain corresponds to 65–98; it reads PFRIVEAACGMKWILPFIFCPLSGFLFFTTIYLT. A disulfide bond links Cys84 and Cys165. The chain crosses the membrane as a helical span at residues 99 to 119; the sequence is SLFLMTVSIERFLSVAYPLWY. At 120–127 the chain is on the cytoplasmic side; it reads KTRPRLAQ. The helical transmembrane segment at 128 to 148 threads the bilayer; that stretch reads AGLVSGICWFLASAHCSVIYV. Over 149–183 the chain is Extracellular; it reads TEYWGNATYSQGTNGTCYLEFREDQLAILLPVRLE. The helical transmembrane segment at 184–206 threads the bilayer; sequence MAVVLFMVPLCITSYCYSRLVWI. Over 207 to 218 the chain is Cytoplasmic; sequence LSQGASRRRRKR. The helical transmembrane segment at 219 to 239 threads the bilayer; the sequence is VMGLLVATLLIFFVCFGPYNM. Residues 240–254 lie on the Extracellular side of the membrane; sequence SHVVGYVRGESPTWR. Residues 255-275 form a helical membrane-spanning segment; the sequence is SYVLLLSTLNSCIDPLVFYFS. Residues 276 to 319 lie on the Cytoplasmic side of the membrane; that stretch reads SSKFQADFHQLLSRLIRACVPWTQEVSLELKVKNGEEPSKECPS.

Belongs to the G-protein coupled receptor 1 family. Expressed in the sympathetic nervous system.

It is found in the cell membrane. Functionally, g protein-coupled receptor that is activated by a major product of dietary fiber digestion, the short chain fatty acids (SCFAs), and that plays a role in the regulation of whole-body energy homeostasis and in intestinal immunity. In omnivorous mammals, the short chain fatty acids acetate, propionate and butyrate are produced primarily by the gut microbiome that metabolizes dietary fibers. SCFAs serve as a source of energy but also act as signaling molecules. That G protein-coupled receptor is probably coupled to the pertussis toxin-sensitive, G(i/o)-alpha family of G proteins. Its activation results in the formation of inositol 1,4,5-trisphosphate, the mobilization of intracellular calcium, the phosphorylation of the MAPK3/ERK1 and MAPK1/ERK2 kinases and the inhibition of intracellular cAMP accumulation. Activated by SCFAs and by beta-hydroxybutyrate, a ketone body produced by the liver upon starvation, it inhibits N-type calcium channels and modulates the activity of sympathetic neurons through a signaling cascade involving the beta and gamma subunits of its coupled G protein, phospholipase C and MAP kinases. Thereby, it may regulate energy expenditure through the control of the sympathetic nervous system that controls for instance heart rate. Upon activation by SCFAs accumulating in the intestine, it may also signal to the brain via neural circuits which in turn would regulate intestinal gluconeogenesis. May also control the production of hormones involved in whole-body energy homeostasis. May for instance, regulate blood pressure through renin secretion. May also regulate secretion of the PYY peptide by enteroendocrine cells and control gut motility, intestinal transit rate, and the harvesting of energy from SCFAs produced by gut microbiota. May also indirectly regulate the production of LEP/Leptin, a hormone acting on the CNS to inhibit food intake, in response to the presence of short-chain fatty acids in the intestine. Finally, may also play a role in glucose homeostasis. Besides its role in energy homeostasis, may play a role in intestinal immunity. May mediate the activation of the inflammatory and immune response by SCFAs in the gut, regulating the rapid production of chemokines and cytokines by intestinal epithelial cells. This is Free fatty acid receptor 3 (Ffar3) from Rattus norvegicus (Rat).